Here is a 373-residue protein sequence, read N- to C-terminus: tRNA N6-adenosine threonylcarbamoyltransferase (373 aa).

A divalent metal cation is bound by residues histidine 128, histidine 132, and tyrosine 149. Substrate contacts are provided by residues 149–153 (YVSGG), aspartate 181, glycine 196, glutamate 200, and asparagine 302. Aspartate 331 contributes to the a divalent metal cation binding site.

This sequence belongs to the KAE1 / TsaD family. As to quaternary structure, component of the EKC/KEOPS complex composed of at least BUD32, CGI121, GON7, KAE1 and PCC1; the whole complex dimerizes. Requires a divalent metal cation as cofactor.

The protein localises to the cytoplasm. It is found in the nucleus. The enzyme catalyses L-threonylcarbamoyladenylate + adenosine(37) in tRNA = N(6)-L-threonylcarbamoyladenosine(37) in tRNA + AMP + H(+). Its function is as follows. Component of the EKC/KEOPS complex that is required for the formation of a threonylcarbamoyl group on adenosine at position 37 (t(6)A37) in tRNAs that read codons beginning with adenine. The complex is probably involved in the transfer of the threonylcarbamoyl moiety of threonylcarbamoyl-AMP (TC-AMP) to the N6 group of A37. KAE1 likely plays a direct catalytic role in this reaction, but requires other protein(s) of the complex to fulfill this activity. The EKC/KEOPS complex also promotes both telomere uncapping and telomere elongation. The complex is required for efficient recruitment of transcriptional coactivators. This chain is tRNA N6-adenosine threonylcarbamoyltransferase, found in Candida glabrata (strain ATCC 2001 / BCRC 20586 / JCM 3761 / NBRC 0622 / NRRL Y-65 / CBS 138) (Yeast).